The following is a 245-amino-acid chain: Hydrolase pyvD (245 aa).

Active-site residues include C133, D179, and H211.

The protein belongs to the dienelactone hydrolase family.

Its pathway is secondary metabolite biosynthesis. In terms of biological role, hydrolase; part of the gene cluster that mediates the biosynthesis of pyranoviolin A, a pyranonigrin analog with a C-3 methoxy group. Initially, the PKS portion of pyvA synthesizes C-10 carbon chain from 5 molecules of malonyl-CoA, which is then condensed with the thiolation (T) domain-bound glycine activated by the adenylation (A) domain. The subsequent chain release by Dieckmann condensation (DKC) could be catalyzed by the TE domain present at the C-terminus of pyvA and/or the alpha/beta hydrolase pyvD, installing the tetramic acid moiety. The FAD-dependent monooxygenase pyvC next epoxidizes one of the olefins of the polyketide part, and the epoxide ring-opening induces the dihydro-gamma-pyrone ring formation. The cytochrome P450 monooxygeanse pyvB would be responsible for the 2 consecutive reactions, in which the dihydro-gamma-pyrone is oxidized to gamma-pyrone and C-7 is hydroxylated to yield pyranonigrin F. Finally, the O-methyltransferase pyvH methylates the C-3 hydroxy group to complete the biosynthesis. The chain is Hydrolase pyvD from Aspergillus violaceofuscus (strain CBS 115571).